A 200-amino-acid polypeptide reads, in one-letter code: Dephospho-CoA kinase (200 aa).

The DPCK domain maps to 4 to 200 (VIGLTGGIAS…VILKNWNIID (197 aa)). 12 to 17 (ASGKST) contributes to the ATP binding site.

It belongs to the CoaE family.

Its subcellular location is the cytoplasm. The enzyme catalyses 3'-dephospho-CoA + ATP = ADP + CoA + H(+). The protein operates within cofactor biosynthesis; coenzyme A biosynthesis; CoA from (R)-pantothenate: step 5/5. In terms of biological role, catalyzes the phosphorylation of the 3'-hydroxyl group of dephosphocoenzyme A to form coenzyme A. The chain is Dephospho-CoA kinase from Bacillus cereus (strain ATCC 10987 / NRS 248).